A 379-amino-acid polypeptide reads, in one-letter code: Glutamate 5-kinase (379 aa).

An ATP-binding site is contributed by K20. S59, D146, and N158 together coordinate substrate. 220 to 226 serves as a coordination point for ATP; sequence SGGMYSK. Positions 285–362 constitute a PUA domain; sequence TGSVVVDDGA…AELTAILGDN (78 aa).

The protein belongs to the glutamate 5-kinase family.

The protein localises to the cytoplasm. The catalysed reaction is L-glutamate + ATP = L-glutamyl 5-phosphate + ADP. Its pathway is amino-acid biosynthesis; L-proline biosynthesis; L-glutamate 5-semialdehyde from L-glutamate: step 1/2. Functionally, catalyzes the transfer of a phosphate group to glutamate to form L-glutamate 5-phosphate. The protein is Glutamate 5-kinase of Oleidesulfovibrio alaskensis (strain ATCC BAA-1058 / DSM 17464 / G20) (Desulfovibrio alaskensis).